The following is a 506-amino-acid chain: Chorion-specific transcription factor GCMb (506 aa).

The segment at residues 19–174 (LSWDINDPQM…KSETEARRSA (156 aa)) is a DNA-binding region (GCM). Residues Cys-81, Cys-87, Cys-91, Cys-118, Cys-121, Cys-130, His-157, and His-159 each coordinate Zn(2+). Over residues 155–172 (GVHDHPRPESKSETEARR) the composition is skewed to basic and acidic residues. The disordered stretch occupies residues 155–213 (GVHDHPRPESKSETEARRSAIKRQMASFYQPQKKRIRESEAEENQDSSGHFSNIPPLEN). The tract at residues 379–395 (LQTVITTTTKVSYQAYQ) is C-terminal conserved inhibitory domain (CCID).

Its subcellular location is the nucleus. Transcription factor that binds specific sequences on gene promoters and activate their transcription. Through the regulation of gene transcription, may play a role in parathyroid gland development. This chain is Chorion-specific transcription factor GCMb, found in Homo sapiens (Human).